Consider the following 715-residue polypeptide: Methionine--tRNA ligase (715 aa).

Residues 17-27 (PYANGPIHLGH) carry the 'HIGH' region motif. The Zn(2+) site is built by C148, C151, C161, and C164. Positions 359-363 (KMSKS) match the 'KMSKS' region motif. K362 is an ATP binding site. The tRNA-binding domain occupies 614–715 (DLSKVELRVG…KDAKPGDRLK (102 aa)).

It belongs to the class-I aminoacyl-tRNA synthetase family. MetG type 1 subfamily. In terms of assembly, homodimer. Requires Zn(2+) as cofactor.

The protein localises to the cytoplasm. The catalysed reaction is tRNA(Met) + L-methionine + ATP = L-methionyl-tRNA(Met) + AMP + diphosphate. Its function is as follows. Is required not only for elongation of protein synthesis but also for the initiation of all mRNA translation through initiator tRNA(fMet) aminoacylation. The protein is Methionine--tRNA ligase of Leptospira interrogans serogroup Icterohaemorrhagiae serovar copenhageni (strain Fiocruz L1-130).